A 128-amino-acid polypeptide reads, in one-letter code: NADH-quinone oxidoreductase subunit A (128 aa).

3 helical membrane passes run 9–29 (FPIA…LALA), 68–88 (LLFI…VLLL), and 96–116 (LGWA…AGLV).

It belongs to the complex I subunit 3 family. As to quaternary structure, NDH-1 is composed of 14 different subunits. Subunits NuoA, H, J, K, L, M, N constitute the membrane sector of the complex.

The protein resides in the cell inner membrane. The enzyme catalyses a quinone + NADH + 5 H(+)(in) = a quinol + NAD(+) + 4 H(+)(out). Its function is as follows. NDH-1 shuttles electrons from NADH, via FMN and iron-sulfur (Fe-S) centers, to quinones in the respiratory chain. The immediate electron acceptor for the enzyme in this species is believed to be ubiquinone. Couples the redox reaction to proton translocation (for every two electrons transferred, four hydrogen ions are translocated across the cytoplasmic membrane), and thus conserves the redox energy in a proton gradient. The chain is NADH-quinone oxidoreductase subunit A from Anaeromyxobacter sp. (strain Fw109-5).